Reading from the N-terminus, the 452-residue chain is F-box only protein 47 (452 aa).

One can recognise an F-box domain in the interval 41–91; the sequence is FGNFKALPLEIFQIILKYLSVKDISMLSMVSKTVSQHIINYISTSSGSKRL.

In terms of assembly, part of a SCF (SKP1-cullin-F-box) protein ligase complex. As to expression, widely expressed, with highest levels in kidney, liver and pancreas. Down-regulated in tumors.

Functionally, probably recognizes and binds to some phosphorylated proteins and promotes their ubiquitination and degradation. The protein is F-box only protein 47 of Homo sapiens (Human).